A 166-amino-acid polypeptide reads, in one-letter code: Putative peroxisomal peroxiredoxin (166 aa).

The Thioredoxin domain occupies 5-166; the sequence is FPEDVKFLYI…SGVDAVLAAL (162 aa). The active-site Cysteine sulfenic acid (-SOH) intermediate is Cys56.

It belongs to the peroxiredoxin family. Prx5 subfamily. As to quaternary structure, homodimer; disulfide-linked, upon oxidation.

The catalysed reaction is a hydroperoxide + [protein]-dithiol = [protein]-disulfide + an alcohol + H2O. Its function is as follows. Thiol-specific peroxidase that catalyzes the reduction of hydrogen peroxide and organic hydroperoxides to water and alcohols, respectively. Plays a role in cell protection against oxidative stress by detoxifying peroxides and as sensor of hydrogen peroxide-mediated signaling events. The sequence is that of Putative peroxisomal peroxiredoxin from Lipomyces kononenkoae (Yeast).